The following is a 368-amino-acid chain: Phospho-N-acetylmuramoyl-pentapeptide-transferase (368 aa).

10 consecutive transmembrane segments (helical) span residues 2–22 (IALI…TPLL), 51–71 (TLGG…SALY), 80–100 (PTWA…LGFI), 116–136 (VGGK…LALI), 166–186 (IVAI…WTNA), 193–213 (LDGL…IIAM), 234–254 (PLDL…FLWY), 256–276 (CNPA…GLFA), 277–297 (ALSI…LFVV), and 340–360 (FWIV…GNWV).

Belongs to the glycosyltransferase 4 family. MraY subfamily. The cofactor is Mg(2+).

The protein localises to the cell membrane. The enzyme catalyses UDP-N-acetyl-alpha-D-muramoyl-L-alanyl-gamma-D-glutamyl-meso-2,6-diaminopimeloyl-D-alanyl-D-alanine + di-trans,octa-cis-undecaprenyl phosphate = di-trans,octa-cis-undecaprenyl diphospho-N-acetyl-alpha-D-muramoyl-L-alanyl-D-glutamyl-meso-2,6-diaminopimeloyl-D-alanyl-D-alanine + UMP. Its pathway is cell wall biogenesis; peptidoglycan biosynthesis. Its function is as follows. Catalyzes the initial step of the lipid cycle reactions in the biosynthesis of the cell wall peptidoglycan: transfers peptidoglycan precursor phospho-MurNAc-pentapeptide from UDP-MurNAc-pentapeptide onto the lipid carrier undecaprenyl phosphate, yielding undecaprenyl-pyrophosphoryl-MurNAc-pentapeptide, known as lipid I. The sequence is that of Phospho-N-acetylmuramoyl-pentapeptide-transferase from Bifidobacterium animalis subsp. lactis (strain AD011).